Consider the following 420-residue polypeptide: Septin-8-A (420 aa).

The Septin-type G domain occupies 39–305 (QGFCFNILCV…ELYRRCKLEE (267 aa)). The interval 49 to 56 (GETGIGKS) is G1 motif. Residues 49–56 (GETGIGKS), G104, 185–193 (KADTISKSE), G239, and R254 each bind GTP. Residues 101-104 (DTVG) are G3 motif. Residues 184–187 (AKAD) form a G4 motif region. Residues 321-407 (QETYEAKRKE…RRKVAAETLS (87 aa)) adopt a coiled-coil conformation. The segment at 393-420 (MNAFNRRKVAAETLSLSQPLKKDKDKKN) is disordered.

Belongs to the TRAFAC class TrmE-Era-EngA-EngB-Septin-like GTPase superfamily. Septin GTPase family.

This is Septin-8-A (sept8a) from Danio rerio (Zebrafish).